We begin with the raw amino-acid sequence, 299 residues long: Formylglycine-generating enzyme (299 aa).

Cu cation contacts are provided by cysteine 263 and cysteine 268.

The protein belongs to the sulfatase-modifying factor family. Cu cation is required as a cofactor.

The enzyme catalyses L-cysteinyl-[sulfatase] + 2 a thiol + O2 = an organic disulfide + 3-oxo-L-alanyl-[sulfatase] + hydrogen sulfide + H2O + H(+). It functions in the pathway protein modification; sulfatase oxidation. Its function is as follows. Oxidase that catalyzes the conversion of cysteine to 3-oxoalanine on target proteins. 3-oxoalanine modification, which is also named formylglycine (fGly), occurs in the maturation of arylsulfatases and some alkaline phosphatases that use the hydrated form of 3-oxoalanine as a catalytic nucleophile. The chain is Formylglycine-generating enzyme from Mycobacterium tuberculosis (strain ATCC 25618 / H37Rv).